The primary structure comprises 397 residues: Subtilisin-like protease 3 (397 aa).

The signal sequence occupies residues 1-19; that stretch reads MGCIKVISVFLAAIAAVDA. Residues 20–116 constitute a propeptide that is removed on maturation; sequence RAFFHNRGGN…VEHDRVVKLA (97 aa). Residues 35–116 form the Inhibitor I9 domain; it reads SYIVVMKDGV…VEHDRVVKLA (82 aa). One can recognise a Peptidase S8 domain in the interval 126–397; that stretch reads TWGLGRVSHK…NRLLYNGSGR (272 aa). Active-site charge relay system residues include aspartate 158 and histidine 189. N-linked (GlcNAc...) asparagine glycosylation occurs at asparagine 250. Catalysis depends on serine 344, which acts as the Charge relay system. Residue asparagine 393 is glycosylated (N-linked (GlcNAc...) asparagine).

The protein belongs to the peptidase S8 family.

Its subcellular location is the secreted. Functionally, secreted subtilisin-like serine protease with keratinolytic activity that contributes to pathogenicity. This Arthroderma benhamiae (strain ATCC MYA-4681 / CBS 112371) (Trichophyton mentagrophytes) protein is Subtilisin-like protease 3 (SUB3).